The primary structure comprises 716 residues: Translation initiation factor IF-2 (716 aa).

The tract at residues 53–135 is disordered; it reads GGAGVTSQKP…PLKPKKELPE (83 aa). The span at 57–83 shows a compositional bias: polar residues; sequence VTSQKPAETNKNKPQGINQQPAGNQPN. Low complexity predominate over residues 93 to 109; the sequence is VQNNQFNKNKKNNNNNK. Positions 217–386 constitute a tr-type G domain; sequence IRPPVVTIMG…LLVSEVEELK (170 aa). Residues 226–233 form a G1 region; that stretch reads GHVDHGKT. 226 to 233 provides a ligand contact to GTP; it reads GHVDHGKT. The G2 stretch occupies residues 251 to 255; sequence GITQH. The tract at residues 272–275 is G3; the sequence is DTPG. GTP contacts are provided by residues 272–276 and 326–329; these read DTPGH and NKVD. Residues 326–329 form a G4 region; that stretch reads NKVD. Residues 362–364 are G5; the sequence is SAL.

It belongs to the TRAFAC class translation factor GTPase superfamily. Classic translation factor GTPase family. IF-2 subfamily.

Its subcellular location is the cytoplasm. In terms of biological role, one of the essential components for the initiation of protein synthesis. Protects formylmethionyl-tRNA from spontaneous hydrolysis and promotes its binding to the 30S ribosomal subunits. Also involved in the hydrolysis of GTP during the formation of the 70S ribosomal complex. In Bacillus velezensis (strain DSM 23117 / BGSC 10A6 / LMG 26770 / FZB42) (Bacillus amyloliquefaciens subsp. plantarum), this protein is Translation initiation factor IF-2.